Reading from the N-terminus, the 392-residue chain is 6-aminohexanoate-dimer hydrolase (392 aa).

The tract at residues 1 to 27 (MNTPTTGSHPARYPSAAAGEPTLDSWQ) is disordered. The active site involves Ser-112.

It catalyses the reaction [N-(6-aminohexanoyl)](n) + H2O = [N-(6-aminohexanoyl)](n-1) + 6-aminohexanoate. The enzyme catalyses N-(6-aminohexanoyl)-6-aminohexanoate + H2O = 2 6-aminohexanoate. The protein operates within xenobiotic degradation; nylon-6 oligomer degradation. Involved in nylon oligomer degradation. This chain is 6-aminohexanoate-dimer hydrolase, found in Paenarthrobacter ureafaciens.